Reading from the N-terminus, the 368-residue chain is Phospho-N-acetylmuramoyl-pentapeptide-transferase (368 aa).

A run of 10 helical transmembrane segments spans residues 32–52 (TGGA…WIID), 79–99 (TPTM…VLWA), 102–122 (LNPY…IGFY), 140–160 (TRLL…IRLG), 176–196 (VVVD…VGAG), 207–227 (GLAI…AYLA), 247–267 (LAVL…FNAP), 271–291 (IFMG…IAVA), 296–316 (IVLA…IVQV), and 345–365 (QIVI…LSTL).

The protein belongs to the glycosyltransferase 4 family. MraY subfamily. Requires Mg(2+) as cofactor.

It localises to the cell inner membrane. The enzyme catalyses UDP-N-acetyl-alpha-D-muramoyl-L-alanyl-gamma-D-glutamyl-meso-2,6-diaminopimeloyl-D-alanyl-D-alanine + di-trans,octa-cis-undecaprenyl phosphate = di-trans,octa-cis-undecaprenyl diphospho-N-acetyl-alpha-D-muramoyl-L-alanyl-D-glutamyl-meso-2,6-diaminopimeloyl-D-alanyl-D-alanine + UMP. Its pathway is cell wall biogenesis; peptidoglycan biosynthesis. Catalyzes the initial step of the lipid cycle reactions in the biosynthesis of the cell wall peptidoglycan: transfers peptidoglycan precursor phospho-MurNAc-pentapeptide from UDP-MurNAc-pentapeptide onto the lipid carrier undecaprenyl phosphate, yielding undecaprenyl-pyrophosphoryl-MurNAc-pentapeptide, known as lipid I. The sequence is that of Phospho-N-acetylmuramoyl-pentapeptide-transferase from Nitrobacter hamburgensis (strain DSM 10229 / NCIMB 13809 / X14).